Consider the following 144-residue polypeptide: UPF0102 protein BURPS1106A_3900 (144 aa).

The interval 1–28 is disordered; it reads MCHAREASPGTGEPEAAPRDNFPRAAGS.

Belongs to the UPF0102 family.

The protein is UPF0102 protein BURPS1106A_3900 of Burkholderia pseudomallei (strain 1106a).